The sequence spans 63 residues: Putative transmembrane protein ORF63 (63 aa).

Over 1 to 8 (MQSGNFTL) the chain is Extracellular. A helical membrane pass occupies residues 9 to 29 (EVIMYLINSILAFIMIFFTFV). Over 30 to 31 (NP) the chain is Cytoplasmic. Residues 32–52 (SLLKCQYWTYILVALITAIIF) form a helical membrane-spanning segment. Over 53–63 (HTGSKVGKSSG) the chain is Extracellular.

The protein localises to the host membrane. The polypeptide is Putative transmembrane protein ORF63 (Acidianus filamentous virus 1 (isolate United States/Yellowstone) (AFV-1)).